A 297-amino-acid chain; its full sequence is MHDGTLQRLFPAAKFDEPLRRYTAWKIGGPADALLEPSSIQELLSAVELAGEHGVPVTVLGGGTNVLVRDGGIRGLTIRLAKSLRGVKLSGETLVAEAGALYPVLANMTASRGLAGLEFATGIPGTVGGAVFMNAGAYGSETARVLLWADILRDGRVVRMGPEELGLSYRRSILHDHPGWVVLRAAYRLHPGDPEDLRERIREFRTLRMNGSPNRPSCGSTFKRPPGDFPGRVIEAAGLKGLRVGQIEVSTVHANYFVNLGGGTASDALRLMELVRERVRERLGVELEPEVRVVGEP.

Positions 27–192 constitute an FAD-binding PCMH-type domain; it reads IGGPADALLE…LRAAYRLHPG (166 aa). Arg170 is an active-site residue. The active-site Proton donor is Ser220. Glu290 is a catalytic residue.

It belongs to the MurB family. FAD serves as cofactor.

The protein localises to the cytoplasm. The enzyme catalyses UDP-N-acetyl-alpha-D-muramate + NADP(+) = UDP-N-acetyl-3-O-(1-carboxyvinyl)-alpha-D-glucosamine + NADPH + H(+). The protein operates within cell wall biogenesis; peptidoglycan biosynthesis. Functionally, cell wall formation. This is UDP-N-acetylenolpyruvoylglucosamine reductase from Rubrobacter xylanophilus (strain DSM 9941 / JCM 11954 / NBRC 16129 / PRD-1).